The following is a 430-amino-acid chain: Glutamate-1-semialdehyde 2,1-aminomutase (430 aa).

Lys267 bears the N6-(pyridoxal phosphate)lysine mark.

This sequence belongs to the class-III pyridoxal-phosphate-dependent aminotransferase family. HemL subfamily. As to quaternary structure, homodimer. It depends on pyridoxal 5'-phosphate as a cofactor.

It localises to the cytoplasm. It carries out the reaction (S)-4-amino-5-oxopentanoate = 5-aminolevulinate. It participates in porphyrin-containing compound metabolism; protoporphyrin-IX biosynthesis; 5-aminolevulinate from L-glutamyl-tRNA(Glu): step 2/2. This chain is Glutamate-1-semialdehyde 2,1-aminomutase, found in Sulfurovum sp. (strain NBC37-1).